Consider the following 92-residue polypeptide: Defensin-like protein 226 (92 aa).

Positions 1 to 27 (MKCGVLFMISCLLITFLVLSHVREVES) are cleaved as a signal peptide. Disulfide bonds link cysteine 33/cysteine 92, cysteine 43/cysteine 71, cysteine 51/cysteine 86, and cysteine 69/cysteine 88.

Belongs to the DEFL family.

The protein resides in the secreted. The chain is Defensin-like protein 226 (SCRL2) from Arabidopsis thaliana (Mouse-ear cress).